A 177-amino-acid polypeptide reads, in one-letter code: Ribulose bisphosphate carboxylase small subunit, chloroplastic (177 aa).

The N-terminal 55 residues, Met1–Asn55, are a transit peptide targeting the chloroplast.

Belongs to the RuBisCO small chain family. As to quaternary structure, heterohexadecamer of 8 large and 8 small subunits.

The protein localises to the plastid. Its subcellular location is the chloroplast. Its function is as follows. RuBisCO catalyzes two reactions: the carboxylation of D-ribulose 1,5-bisphosphate, the primary event in carbon dioxide fixation, as well as the oxidative fragmentation of the pentose substrate. Both reactions occur simultaneously and in competition at the same active site. Although the small subunit is not catalytic it is essential for maximal activity. In Silene latifolia subsp. alba (White campion), this protein is Ribulose bisphosphate carboxylase small subunit, chloroplastic.